The sequence spans 261 residues: Carnitinyl-CoA dehydratase (261 aa).

Glu-111 acts as the Nucleophile in catalysis. Glu-131 (proton acceptor) is an active-site residue.

This sequence belongs to the enoyl-CoA hydratase/isomerase family.

It catalyses the reaction (R)-carnitinyl-CoA = crotonobetainyl-CoA + H2O. Its pathway is amine and polyamine metabolism; carnitine metabolism. Its function is as follows. Catalyzes the reversible dehydration of L-carnitinyl-CoA to crotonobetainyl-CoA. This chain is Carnitinyl-CoA dehydratase, found in Citrobacter koseri (strain ATCC BAA-895 / CDC 4225-83 / SGSC4696).